We begin with the raw amino-acid sequence, 469 residues long: Reticulon-2 (469 aa).

Disordered regions lie at residues 1–180 (MGQV…EASE) and 201–238 (LTPQ…NGEG). The span at 14–25 (APSTASSTPDST) shows a compositional bias: low complexity. Basic and acidic residues predominate over residues 32–43 (SDFRELHTAREF). Ser44 carries the phosphoserine modification. Over residues 135–144 (RPLEELRLRL) the composition is skewed to basic and acidic residues. Composition is skewed to polar residues over residues 159–168 (DSATSSSTPL) and 203–226 (PQLS…QDLN). In terms of domain architecture, Reticulon spans 270-469 (VADLLYWKDT…SVSGSKAKAE (200 aa)). 2 helical membrane-spanning segments follow: residues 293 to 313 (LLCL…LLGL) and 388 to 408 (LLFY…LVIL).

As to quaternary structure, interacts with SPAST. Interacts with BACE1. Interacts (via first transmembrane domain) with ARL6IP5/GTRAP3-18. Interacts (via N-terminus) with SLC1A1/EAAC1; the interaction promotes cell surface expression of SLC1A1. As to expression, expressed in brain and spinal cord (at protein level). In the embryonic brain cortex, expressed in neurons but not in astrocytes (at protein level).

Its subcellular location is the endoplasmic reticulum membrane. It localises to the sarcoplasmic reticulum membrane. The protein localises to the cell membrane. The protein resides in the sarcolemma. It is found in the T-tubule. Its subcellular location is the cytoplasm. It localises to the myofibril. The protein localises to the sarcomere. The protein resides in the z line. It is found in the cytoskeleton. Inhibits amyloid precursor protein processing, probably by blocking BACE1 activity. Enhances trafficking of the glutamate transporter SLC1A1/EAAC1 from the endoplasmic reticulum to the cell surface. Plays a role in the translocation of SLC2A4/GLUT4 from intracellular membranes to the cell membrane which facilitates the uptake of glucose into the cell. The chain is Reticulon-2 from Rattus norvegicus (Rat).